A 63-amino-acid chain; its full sequence is Beta-defensin 6 (63 aa).

An N-terminal signal peptide occupies residues Met1–Ser22. At Gln23 the chain carries Pyrrolidone carboxylic acid. 3 disulfides stabilise this stretch: Cys31/Cys59, Cys38/Cys52, and Cys42/Cys60.

It belongs to the beta-defensin family. In terms of tissue distribution, predominantly expressed in skeletal muscle, also expressed in esophagus, tongue, and trachea. Also expressed in lung when induced by lipopolysaccharide.

Its subcellular location is the secreted. Its function is as follows. Has potent antibacterial activity against E.coli (ATCC 25922). This Mus musculus (Mouse) protein is Beta-defensin 6 (Defb6).